Reading from the N-terminus, the 351-residue chain is Thiamine-phosphate synthase (351 aa).

The unknown stretch occupies residues 1–129 (MVEPYSQKEQ…AKACKQMRYQ (129 aa)). The interval 65–85 (LRAARDTPGDPGTELTHPQEE) is disordered. Residues 130–351 (VYTLESNLMG…SQLNRIKPEL (222 aa)) form a thiamine-phosphate synthase region. Residues 177-181 (QYRDK) and asparagine 209 contribute to the 4-amino-2-methyl-5-(diphosphooxymethyl)pyrimidine site. 2 residues coordinate Mg(2+): aspartate 210 and aspartate 229. 4-amino-2-methyl-5-(diphosphooxymethyl)pyrimidine is bound at residue serine 248. 274–276 (TPT) contributes to the 2-[(2R,5Z)-2-carboxy-4-methylthiazol-5(2H)-ylidene]ethyl phosphate binding site. Lysine 277 contacts 4-amino-2-methyl-5-(diphosphooxymethyl)pyrimidine. Position 304 (glycine 304) interacts with 2-[(2R,5Z)-2-carboxy-4-methylthiazol-5(2H)-ylidene]ethyl phosphate.

This sequence belongs to the thiamine-phosphate synthase family. Mg(2+) is required as a cofactor.

It catalyses the reaction 2-[(2R,5Z)-2-carboxy-4-methylthiazol-5(2H)-ylidene]ethyl phosphate + 4-amino-2-methyl-5-(diphosphooxymethyl)pyrimidine + 2 H(+) = thiamine phosphate + CO2 + diphosphate. The catalysed reaction is 2-(2-carboxy-4-methylthiazol-5-yl)ethyl phosphate + 4-amino-2-methyl-5-(diphosphooxymethyl)pyrimidine + 2 H(+) = thiamine phosphate + CO2 + diphosphate. The enzyme catalyses 4-methyl-5-(2-phosphooxyethyl)-thiazole + 4-amino-2-methyl-5-(diphosphooxymethyl)pyrimidine + H(+) = thiamine phosphate + diphosphate. Its pathway is cofactor biosynthesis; thiamine diphosphate biosynthesis; thiamine phosphate from 4-amino-2-methyl-5-diphosphomethylpyrimidine and 4-methyl-5-(2-phosphoethyl)-thiazole: step 1/1. In terms of biological role, condenses 4-methyl-5-(beta-hydroxyethyl)thiazole monophosphate (THZ-P) and 2-methyl-4-amino-5-hydroxymethyl pyrimidine pyrophosphate (HMP-PP) to form thiamine monophosphate (TMP). In Nostoc punctiforme (strain ATCC 29133 / PCC 73102), this protein is Thiamine-phosphate synthase.